The primary structure comprises 275 residues: Glycerol-3-phosphate dehydrogenase [NAD(P)+] (275 aa).

The NADPH site is built by tryptophan 12, arginine 32, and lysine 105. Sn-glycerol 3-phosphate is bound by residues lysine 105, glycine 133, and threonine 135. Alanine 137 lines the NADPH pocket. Lysine 188, aspartate 241, serine 251, arginine 252, and asparagine 253 together coordinate sn-glycerol 3-phosphate. Lysine 188 serves as the catalytic Proton acceptor. Position 252 (arginine 252) interacts with NADPH.

Belongs to the NAD-dependent glycerol-3-phosphate dehydrogenase family.

It localises to the cytoplasm. It carries out the reaction sn-glycerol 3-phosphate + NAD(+) = dihydroxyacetone phosphate + NADH + H(+). The catalysed reaction is sn-glycerol 3-phosphate + NADP(+) = dihydroxyacetone phosphate + NADPH + H(+). It participates in membrane lipid metabolism; glycerophospholipid metabolism. Its function is as follows. Catalyzes the reduction of the glycolytic intermediate dihydroxyacetone phosphate (DHAP) to sn-glycerol 3-phosphate (G3P), the key precursor for phospholipid synthesis. The protein is Glycerol-3-phosphate dehydrogenase [NAD(P)+] of Paramagnetospirillum magneticum (strain ATCC 700264 / AMB-1) (Magnetospirillum magneticum).